A 151-amino-acid polypeptide reads, in one-letter code: 3-hydroxyacyl-[acyl-carrier-protein] dehydratase FabZ (151 aa).

The active site involves His56.

This sequence belongs to the thioester dehydratase family. FabZ subfamily.

It localises to the cytoplasm. It carries out the reaction a (3R)-hydroxyacyl-[ACP] = a (2E)-enoyl-[ACP] + H2O. Its function is as follows. Involved in unsaturated fatty acids biosynthesis. Catalyzes the dehydration of short chain beta-hydroxyacyl-ACPs and long chain saturated and unsaturated beta-hydroxyacyl-ACPs. The sequence is that of 3-hydroxyacyl-[acyl-carrier-protein] dehydratase FabZ from Rhodopseudomonas palustris (strain ATCC BAA-98 / CGA009).